Here is a 198-residue protein sequence, read N- to C-terminus: Guanylate kinase (198 aa).

An N-acetylglycine modification is found at glycine 2. The Guanylate kinase-like domain occupies 4–186 (PRPVVLSGPS…AYWALKEALS (183 aa)). 14-19 (GAGKST) contributes to the ATP binding site. 37 to 51 (SHTTRDPRPGEENGK) contributes to the substrate binding site. Active-site residues include arginine 44, arginine 137, and arginine 148. 171–172 (ND) lines the ATP pocket.

The protein belongs to the guanylate kinase family. In terms of assembly, monomer. Interacts with RD3.

The protein resides in the photoreceptor inner segment. It localises to the cytoplasm. The protein localises to the cytosol. The enzyme catalyses GMP + ATP = GDP + ADP. Up-regulated by RD3. Its function is as follows. Catalyzes the phosphorylation of GMP to GDP. Essential enzyme for recycling GMP and indirectly, cyclic GMP (cGMP). Involved in the cGMP metabolism in photoreceptors. The sequence is that of Guanylate kinase (GUK1) from Sus scrofa (Pig).